Reading from the N-terminus, the 140-residue chain is Transcription antitermination protein NusB (140 aa).

This sequence belongs to the NusB family.

Functionally, involved in transcription antitermination. Required for transcription of ribosomal RNA (rRNA) genes. Binds specifically to the boxA antiterminator sequence of the ribosomal RNA (rrn) operons. The protein is Transcription antitermination protein NusB of Pseudoalteromonas atlantica (strain T6c / ATCC BAA-1087).